Consider the following 169-residue polypeptide: Ribosome maturation factor RimM (169 aa).

The region spanning 97–169 (EDEYYWTDLV…IITADWGLDY (73 aa)) is the PRC barrel domain.

It belongs to the RimM family. As to quaternary structure, binds ribosomal protein uS19.

The protein resides in the cytoplasm. Functionally, an accessory protein needed during the final step in the assembly of 30S ribosomal subunit, possibly for assembly of the head region. Essential for efficient processing of 16S rRNA. May be needed both before and after RbfA during the maturation of 16S rRNA. It has affinity for free ribosomal 30S subunits but not for 70S ribosomes. In Neisseria meningitidis serogroup C / serotype 2a (strain ATCC 700532 / DSM 15464 / FAM18), this protein is Ribosome maturation factor RimM.